A 132-amino-acid polypeptide reads, in one-letter code: Small ribosomal subunit protein uS9 (132 aa).

Belongs to the universal ribosomal protein uS9 family.

In Mesomycoplasma hyopneumoniae (strain 232) (Mycoplasma hyopneumoniae), this protein is Small ribosomal subunit protein uS9.